The following is a 127-amino-acid chain: Flagellar assembly factor FliW (127 aa).

It belongs to the FliW family. Interacts with translational regulator CsrA and flagellin(s).

It localises to the cytoplasm. In terms of biological role, acts as an anti-CsrA protein, binds CsrA and prevents it from repressing translation of its target genes, one of which is flagellin. Binds to flagellin and participates in the assembly of the flagellum. This is Flagellar assembly factor FliW from Campylobacter concisus (strain 13826).